The primary structure comprises 360 residues: Membrane-bound lytic murein transglycosylase C (360 aa).

The first 16 residues, methionine 1 to serine 16, serve as a signal peptide directing secretion. Residue cysteine 17 is the site of N-palmitoyl cysteine attachment. A lipid anchor (S-diacylglycerol cysteine) is attached at cysteine 17.

Belongs to the transglycosylase Slt family.

The protein resides in the cell outer membrane. It carries out the reaction Exolytic cleavage of the (1-&gt;4)-beta-glycosidic linkage between N-acetylmuramic acid (MurNAc) and N-acetylglucosamine (GlcNAc) residues in peptidoglycan, from either the reducing or the non-reducing ends of the peptidoglycan chains, with concomitant formation of a 1,6-anhydrobond in the MurNAc residue.. Murein-degrading enzyme. May play a role in recycling of muropeptides during cell elongation and/or cell division. The sequence is that of Membrane-bound lytic murein transglycosylase C from Klebsiella pneumoniae subsp. pneumoniae (strain ATCC 700721 / MGH 78578).